The primary structure comprises 478 residues: Solute carrier family 7 member 13 (478 aa).

Residues 1–14 are Cytoplasmic-facing; it reads MAMDSKKEIRLKRE. Residues 15 to 35 form a helical membrane-spanning segment; sequence LGYFWGTNFLIINIIGAGIFV. The Extracellular portion of the chain corresponds to 36-47; the sequence is SPKGVLQHSSMN. A helical transmembrane segment spans residues 48–68; that stretch reads VGVSLCVWAVCAVLTLTSALC. The Cytoplasmic segment spans residues 69–89; it reads SAEIGITFPYSGAHYYFLKRC. A helical membrane pass occupies residues 90–110; the sequence is FGPLVAFLRLWTSLFLGPGLI. The Extracellular portion of the chain corresponds to 111-129; the sequence is ASQALLLAEYGVQPFYPSC. Residues 130 to 150 traverse the membrane as a helical segment; that stretch reads SAPILPRKCLALAMLWIVGIL. The Cytoplasmic portion of the chain corresponds to 151 to 163; it reads NSRGVKELSWLQT. Residues 164 to 184 form a helical membrane-spanning segment; the sequence is VSSVLKVGILGVISLSGLFLL. At 185–208 the chain is on the extracellular side; it reads VRGKKENVQRLQNAFDAEFPEVSQ. A helical transmembrane segment spans residues 209–229; sequence LIEAIFQGYFAFSGGGCFTCI. Over 230–242 the chain is Cytoplasmic; the sequence is AGELKKPSKTIPR. Residues 243 to 263 form a helical membrane-spanning segment; sequence CIFTGLPLVTVVYLLANISYL. The Extracellular portion of the chain corresponds to 264–288; the sequence is TVLTPQEMLSSDAVALTWTDRVIPQ. A helical transmembrane segment spans residues 289 to 309; that stretch reads FTWTVPFAISASLFINLVINV. Over 310 to 338 the chain is Cytoplasmic; the sequence is LETSRVLYIASENGQLPLLFCALNVHSSP. The helical transmembrane segment at 339 to 359 threads the bilayer; sequence FIAVLLIISMASILIVLTNLI. Residue Asp-360 is a topological domain, extracellular. The chain crosses the membrane as a helical span at residues 361-381; the sequence is LINYLYFVVSIWTALSIIGIL. The Cytoplasmic segment spans residues 382 to 395; sequence KLRYQEPNLHRPYK. The helical transmembrane segment at 396–416 threads the bilayer; sequence VFLPFTFIALGITLSLVLIPL. Residues 417–423 lie on the Extracellular side of the membrane; that stretch reads VKSPKLH. Residues 424-444 form a helical membrane-spanning segment; sequence YIYVFLFLLSGLVFYVPLIHF. Residues 445–478 are Cytoplasmic-facing; that stretch reads KVKFVWFQKLTCYLQLLFNICIPDVSDDHIHEES.

This sequence belongs to the amino acid-polyamine-organocation (APC) superfamily. As to quaternary structure, disulfide-linked heterodimer composed of the catalytic light subunit SLC7A13 and the heavy subunit SLC3A1. In terms of tissue distribution, expressed in renal tubules in the outer stripe of the outer medulla and medullary ray (at protein level). Detected in male but not in female kidney.

It localises to the apical cell membrane. It carries out the reaction L-cystine(out) + L-aspartate(in) = L-cystine(in) + L-aspartate(out). The enzyme catalyses L-cystine(out) = L-cystine(in). The catalysed reaction is L-aspartate(in) + L-glutamate(out) = L-aspartate(out) + L-glutamate(in). It catalyses the reaction L-aspartate(in) + L-glutamine(out) = L-aspartate(out) + L-glutamine(in). It carries out the reaction L-aspartate(in) + L-methionine(out) = L-aspartate(out) + L-methionine(in). The enzyme catalyses L-leucine(out) + L-aspartate(in) = L-leucine(in) + L-aspartate(out). The catalysed reaction is L-valine(out) + L-aspartate(in) = L-valine(in) + L-aspartate(out). It catalyses the reaction L-aspartate(in) + L-phenylalanine(out) = L-aspartate(out) + L-phenylalanine(in). It carries out the reaction L-tyrosine(out) + L-aspartate(in) = L-tyrosine(in) + L-aspartate(out). The enzyme catalyses L-tryptophan(out) + L-aspartate(in) = L-tryptophan(in) + L-aspartate(out). Associates with SLC3A1/rBAT to form a functional heterodimeric complex that transports anionic and neutral amino acids across the apical plasma membrane of renal epithelium. Preferentially mediates exchange transport, but can also operate via facilitated diffusion. May act as a major transporter for L-cystine in late proximal tubules, ensuring its reabsorption from the luminal fluid in exchange for cytosolic L-glutamate or L-aspartate. This chain is Solute carrier family 7 member 13, found in Mus musculus (Mouse).